Here is a 259-residue protein sequence, read N- to C-terminus: Transmembrane protein 81 (259 aa).

The N-terminal stretch at 1 to 18 (MALSTLWLVLMLWTSLFS) is a signal peptide. Over 19–221 (DSQCSTLSQA…KVYSSSTIRN (203 aa)) the chain is Extracellular. The Ig-like domain maps to 97–172 (GRRLVLDCLE…VLDTGKRRVK (76 aa)). Cysteine 104 and cysteine 161 are oxidised to a cystine. The chain crosses the membrane as a helical span at residues 222–242 (IVIISVPLSFAIAVVIFIFLF). Residues 243 to 259 (CYSRRARRAAHLCQDNI) are Cytoplasmic-facing.

As to quaternary structure, forms a complex with izumo1 and spaca6 on spermatocyte cell membrane. The complex binds to oocyte protein bncr. Expressed in sperm.

It is found in the cell membrane. Its function is as follows. Essential fertilization factor required for male fertility. Part of a conserved trimeric sperm complex with the essential fertilization factors IZUMO1 and SPACA6 which bridges sperm and oocyte membranes during fertilization by binding to IZUMO1R/JUNO on the oocyte. This chain is Transmembrane protein 81, found in Danio rerio (Zebrafish).